Consider the following 469-residue polypeptide: Uronate isomerase (469 aa).

The protein belongs to the metallo-dependent hydrolases superfamily. Uronate isomerase family.

It catalyses the reaction D-glucuronate = D-fructuronate. The enzyme catalyses aldehydo-D-galacturonate = keto-D-tagaturonate. Its pathway is carbohydrate metabolism; pentose and glucuronate interconversion. The chain is Uronate isomerase from Yersinia pseudotuberculosis serotype O:1b (strain IP 31758).